A 431-amino-acid chain; its full sequence is Glutamate-1-semialdehyde 2,1-aminomutase 1 (431 aa).

Lysine 268 is modified (N6-(pyridoxal phosphate)lysine).

This sequence belongs to the class-III pyridoxal-phosphate-dependent aminotransferase family. HemL subfamily. As to quaternary structure, homodimer. The cofactor is pyridoxal 5'-phosphate.

It is found in the cytoplasm. It carries out the reaction (S)-4-amino-5-oxopentanoate = 5-aminolevulinate. It participates in porphyrin-containing compound metabolism; protoporphyrin-IX biosynthesis; 5-aminolevulinate from L-glutamyl-tRNA(Glu): step 2/2. This Bacillus pumilus (strain SAFR-032) protein is Glutamate-1-semialdehyde 2,1-aminomutase 1.